The chain runs to 276 residues: Hemin import ATP-binding protein HmuV (276 aa).

One can recognise an ABC transporter domain in the interval 2–259 (LTAHHLDVAR…AHIAQCYGFA (258 aa)). 34-41 (GRNGAGKS) serves as a coordination point for ATP.

This sequence belongs to the ABC transporter superfamily. Heme (hemin) importer (TC 3.A.1.14.5) family. The complex is composed of two ATP-binding proteins (HmuV), two transmembrane proteins (HmuU) and a solute-binding protein (HmuT).

The protein localises to the cell inner membrane. In terms of biological role, part of the ABC transporter complex HmuTUV involved in hemin import. Responsible for energy coupling to the transport system. The sequence is that of Hemin import ATP-binding protein HmuV from Burkholderia cenocepacia (strain HI2424).